The following is a 231-amino-acid chain: Large ribosomal subunit protein uL1 (231 aa).

This sequence belongs to the universal ribosomal protein uL1 family. In terms of assembly, part of the 50S ribosomal subunit.

Functionally, binds directly to 23S rRNA. The L1 stalk is quite mobile in the ribosome, and is involved in E site tRNA release. Its function is as follows. Protein L1 is also a translational repressor protein, it controls the translation of the L11 operon by binding to its mRNA. The chain is Large ribosomal subunit protein uL1 from Legionella pneumophila (strain Paris).